The primary structure comprises 626 residues: MRQATMDFSTSSVFDQHKGDSSEEVDLAMVYQAASNGDVNSLTSVIREDPSILECCDSEGCTPLMHAVSGRQVDTVKLLLKMGANINTQDAYGRTSLCLATYLGWLEGCVSLLRNGAKHNIPDKNGRLPLHAATAEPDVRLLIVLLQQSSLSEINHQDTEGMTPLHWAAFHNRPQHTQMLLKKGADPTLVDKDFKTALHWAVQSGNRILCSIILSHRQGPSIINYDDESGKTCVHIAAASGFGDIINDLAKVPECNLQALDVDDRTPLHWAAASGKAECVQSLLDLGMDSNLRDINESTPLAYALYCGHTACVRLLSREGRAEPARPLPSQNSQPQKKEGRFSMLNQIFCKNKKEEQKAHQKDQSRARPKEEETSEVNDIIATFDSVVDTNCQGQPGDQVDMVVFKKRTSENSKYLLPEKKSLARKGLPPIRTQSLPPITLGGHFLTASQGAVSHAGLNAGPQHTAQRSQKSRSEQDLLNNRTGCPVSLENPWKGDTRQVFSCKAWTVSSSDKLLDRLFAGQPGHQELSGPPHLPHLHNPSSGQALQHLSPNRPKIRDLPFTRNSLAPLPDQKFLSGEPLRTNRVLPAIPSQRGHDPSPAGESQRGHDPPRAEESGGSSSPTHDEN.

ANK repeat units follow at residues V25–E54, E59–T88, Y92–K124, N125–H156, E160–L189, D193–I222, S229–A259, D263–L292, and N296–A325. Residues K354–E372 show a composition bias toward basic and acidic residues. Disordered stretches follow at residues K354–V377, H455–N491, and Q522–N626. Position 474 is a phosphoserine (S474). Residues Q604–E614 are compositionally biased toward basic and acidic residues. The segment covering G616 to N626 has biased composition (polar residues).

This chain is Ankyrin repeat domain-containing protein 55 (Ankrd55), found in Mus musculus (Mouse).